The sequence spans 149 residues: 3-dehydroquinate dehydratase (149 aa).

Tyr-26 (proton acceptor) is an active-site residue. Substrate contacts are provided by Asn-77, His-83, and Asp-90. The active-site Proton donor is His-103. Substrate-binding positions include 104-105 (LS) and Arg-114.

This sequence belongs to the type-II 3-dehydroquinase family. As to quaternary structure, homododecamer.

It catalyses the reaction 3-dehydroquinate = 3-dehydroshikimate + H2O. The protein operates within metabolic intermediate biosynthesis; chorismate biosynthesis; chorismate from D-erythrose 4-phosphate and phosphoenolpyruvate: step 3/7. Functionally, catalyzes a trans-dehydration via an enolate intermediate. The protein is 3-dehydroquinate dehydratase of Aliivibrio salmonicida (strain LFI1238) (Vibrio salmonicida (strain LFI1238)).